The chain runs to 263 residues: Phosphatidylglycerol--prolipoprotein diacylglyceryl transferase (263 aa).

Helical transmembrane passes span 15-35 (ISIHWYAICIVSGLLLAVYLA), 52-72 (FILLAFPIAIVGARLYYVIFQ), 83-103 (IFAIWNGGIAIYGGLIAGAAV), and 112-132 (AIAVLDFLDIAAPGVMIAQSI). A 1,2-diacyl-sn-glycero-3-phospho-(1'-sn-glycerol) is bound at residue Arg-134. 3 consecutive transmembrane segments (helical) span residues 170 to 190 (VPTFLYESLWNLVGFSIILGL), 200 to 220 (GDVTSFYLIWYGLGRFVIEGM), and 227 to 247 (FVGLRVSQWVSISIIILGAVL).

The protein belongs to the Lgt family.

Its subcellular location is the cell membrane. The enzyme catalyses L-cysteinyl-[prolipoprotein] + a 1,2-diacyl-sn-glycero-3-phospho-(1'-sn-glycerol) = an S-1,2-diacyl-sn-glyceryl-L-cysteinyl-[prolipoprotein] + sn-glycerol 1-phosphate + H(+). It participates in protein modification; lipoprotein biosynthesis (diacylglyceryl transfer). Functionally, catalyzes the transfer of the diacylglyceryl group from phosphatidylglycerol to the sulfhydryl group of the N-terminal cysteine of a prolipoprotein, the first step in the formation of mature lipoproteins. The polypeptide is Phosphatidylglycerol--prolipoprotein diacylglyceryl transferase (Streptococcus thermophilus (strain CNRZ 1066)).